We begin with the raw amino-acid sequence, 429 residues long: Bifunctional protein GlmU (429 aa).

Residues 1 to 223 (MKTSILILAA…EDEFMGINDK (223 aa)) form a pyrophosphorylase region. UDP-N-acetyl-alpha-D-glucosamine is bound by residues 8 to 11 (LAAG), Lys-22, and 81 to 82 (GT). Asp-102 lines the Mg(2+) pocket. UDP-N-acetyl-alpha-D-glucosamine-binding residues include Gly-135, Glu-149, Asn-164, and Asn-221. A Mg(2+)-binding site is contributed by Asn-221. Residues 224 to 244 (FELSIAENFMQKKIKKYWMQQ) form a linker region. The N-acetyltransferase stretch occupies residues 245-429 (GVIFHLPQST…KDYYYKKFQK (185 aa)). UDP-N-acetyl-alpha-D-glucosamine-binding residues include Arg-308 and Lys-325. His-336 serves as the catalytic Proton acceptor. UDP-N-acetyl-alpha-D-glucosamine-binding residues include Tyr-339 and Asn-350. Residues 359-360 (NY), Ser-378, Ala-396, and Arg-413 each bind acetyl-CoA.

The protein in the N-terminal section; belongs to the N-acetylglucosamine-1-phosphate uridyltransferase family. This sequence in the C-terminal section; belongs to the transferase hexapeptide repeat family. In terms of assembly, homotrimer. Mg(2+) serves as cofactor.

It is found in the cytoplasm. The enzyme catalyses alpha-D-glucosamine 1-phosphate + acetyl-CoA = N-acetyl-alpha-D-glucosamine 1-phosphate + CoA + H(+). The catalysed reaction is N-acetyl-alpha-D-glucosamine 1-phosphate + UTP + H(+) = UDP-N-acetyl-alpha-D-glucosamine + diphosphate. The protein operates within nucleotide-sugar biosynthesis; UDP-N-acetyl-alpha-D-glucosamine biosynthesis; N-acetyl-alpha-D-glucosamine 1-phosphate from alpha-D-glucosamine 6-phosphate (route II): step 2/2. It functions in the pathway nucleotide-sugar biosynthesis; UDP-N-acetyl-alpha-D-glucosamine biosynthesis; UDP-N-acetyl-alpha-D-glucosamine from N-acetyl-alpha-D-glucosamine 1-phosphate: step 1/1. It participates in bacterial outer membrane biogenesis; LPS lipid A biosynthesis. Its function is as follows. Catalyzes the last two sequential reactions in the de novo biosynthetic pathway for UDP-N-acetylglucosamine (UDP-GlcNAc). The C-terminal domain catalyzes the transfer of acetyl group from acetyl coenzyme A to glucosamine-1-phosphate (GlcN-1-P) to produce N-acetylglucosamine-1-phosphate (GlcNAc-1-P), which is converted into UDP-GlcNAc by the transfer of uridine 5-monophosphate (from uridine 5-triphosphate), a reaction catalyzed by the N-terminal domain. The sequence is that of Bifunctional protein GlmU from Campylobacter jejuni subsp. jejuni serotype O:2 (strain ATCC 700819 / NCTC 11168).